The chain runs to 430 residues: Adenylosuccinate synthetase (430 aa).

GTP contacts are provided by residues 12 to 18 (GDEGKGK) and 40 to 42 (GHT). The active-site Proton acceptor is aspartate 13. Mg(2+) is bound by residues aspartate 13 and glycine 40. Residues 13–16 (DEGK), 38–41 (NAGH), threonine 130, arginine 144, glutamine 224, threonine 239, and arginine 303 contribute to the IMP site. Histidine 41 acts as the Proton donor in catalysis. Substrate is bound at residue 299 to 305 (TNTGRAR). Residues arginine 305, 331–333 (KLD), and 413–415 (STS) each bind GTP.

Belongs to the adenylosuccinate synthetase family. Homodimer. Mg(2+) serves as cofactor.

The protein localises to the cytoplasm. It carries out the reaction IMP + L-aspartate + GTP = N(6)-(1,2-dicarboxyethyl)-AMP + GDP + phosphate + 2 H(+). Its pathway is purine metabolism; AMP biosynthesis via de novo pathway; AMP from IMP: step 1/2. In terms of biological role, plays an important role in the de novo pathway of purine nucleotide biosynthesis. Catalyzes the first committed step in the biosynthesis of AMP from IMP. This chain is Adenylosuccinate synthetase, found in Hyphomonas neptunium (strain ATCC 15444).